The sequence spans 389 residues: S-adenosylmethionine synthase (389 aa).

Residue His18 coordinates ATP. Asp20 is a Mg(2+) binding site. K(+) is bound at residue Glu46. The L-methionine site is built by Glu59 and Gln103. The segment at 103-113 (QSADIAMGVDS) is flexible loop. ATP is bound by residues 168 to 170 (DSK), Asp244, 250 to 251 (RK), Ala267, and Lys271. L-methionine is bound at residue Asp244. Lys275 contacts L-methionine.

Belongs to the AdoMet synthase family. As to quaternary structure, homotetramer; dimer of dimers. Mg(2+) serves as cofactor. Requires K(+) as cofactor.

It is found in the cytoplasm. It catalyses the reaction L-methionine + ATP + H2O = S-adenosyl-L-methionine + phosphate + diphosphate. Its pathway is amino-acid biosynthesis; S-adenosyl-L-methionine biosynthesis; S-adenosyl-L-methionine from L-methionine: step 1/1. Its function is as follows. Catalyzes the formation of S-adenosylmethionine (AdoMet) from methionine and ATP. The overall synthetic reaction is composed of two sequential steps, AdoMet formation and the subsequent tripolyphosphate hydrolysis which occurs prior to release of AdoMet from the enzyme. This Pelagibacter ubique (strain HTCC1062) protein is S-adenosylmethionine synthase.